Reading from the N-terminus, the 457-residue chain is MAREGFFTGLDIGTSSVKVLVAEQRNGELNVIGVSNAKSKGVKDGIIVDIDAAATAIKSAISQAEEKAGISIKSVNVGLPGNLLQVEPTQGMIPVTSDTKEITDQDVENVVKSALTKSMTPDREVITFIPEEFIVDGFQGIRDPRGMMGVRLEMRGLLYTGPRTILHNLRKTVERAGVQVENVIISPLAMVQSVLNEGEREFGATVIDMGAGQTTVATIRNQELQFTHILQEGGDYVTKDISKVLKTSRKLAEGLKLNYGEAYPPLASKETFQVEVIGEVEAVEVTEAYLSEIISARIKHILEQIKQELDRRRLLDLPGGIVLIGGNAILPGMVELAQEVFGVRVKLYVPNQVGIRNPAFAHVISLSEFAGQLTEVNLLAQGAIKGENDLSHQPISFGGMLQKTAQFVQSTPVQPAPAPEVEPVAPTEPMADFQQASQNKPKLADRFRGLIGSMFDE.

The protein belongs to the FtsA/MreB family. Self-interacts. Interacts with FtsZ.

It localises to the cell membrane. In terms of biological role, cell division protein that is involved in the assembly of the Z ring. May serve as a membrane anchor for the Z ring. Increased expression restores growth to a PBP2b (penA) deletion strain as well as mreCD and rodA deletions, but not gpsB or rodZ deletions. Does not restore wild-type cell morphology to the penA deletion. This chain is Cell division protein FtsA, found in Streptococcus pneumoniae serotype 2 (strain D39 / NCTC 7466).